A 69-amino-acid chain; its full sequence is NADH dehydrogenase [ubiquinone] 1 beta subcomplex subunit 2 (69 aa).

Belongs to the complex I NDUFB2 subunit family. As to quaternary structure, complex I is composed of at least 49 different subunits.

It localises to the mitochondrion inner membrane. Functionally, accessory subunit of the mitochondrial membrane respiratory chain NADH dehydrogenase (Complex I), that is believed not to be involved in catalysis. Complex I functions in the transfer of electrons from NADH to the respiratory chain. The immediate electron acceptor for the enzyme is believed to be ubiquinone. The sequence is that of NADH dehydrogenase [ubiquinone] 1 beta subcomplex subunit 2 from Arabidopsis thaliana (Mouse-ear cress).